The chain runs to 572 residues: Proline--tRNA ligase (572 aa).

The protein belongs to the class-II aminoacyl-tRNA synthetase family. ProS type 1 subfamily. Homodimer.

Its subcellular location is the cytoplasm. It catalyses the reaction tRNA(Pro) + L-proline + ATP = L-prolyl-tRNA(Pro) + AMP + diphosphate. Catalyzes the attachment of proline to tRNA(Pro) in a two-step reaction: proline is first activated by ATP to form Pro-AMP and then transferred to the acceptor end of tRNA(Pro). As ProRS can inadvertently accommodate and process non-cognate amino acids such as alanine and cysteine, to avoid such errors it has two additional distinct editing activities against alanine. One activity is designated as 'pretransfer' editing and involves the tRNA(Pro)-independent hydrolysis of activated Ala-AMP. The other activity is designated 'posttransfer' editing and involves deacylation of mischarged Ala-tRNA(Pro). The misacylated Cys-tRNA(Pro) is not edited by ProRS. The chain is Proline--tRNA ligase from Yersinia pestis (strain Pestoides F).